The primary structure comprises 406 residues: CCA-adding enzyme (406 aa).

Gly32 and Arg35 together coordinate ATP. Residues Gly32 and Arg35 each contribute to the CTP site. Mg(2+) is bound by residues Asp45 and Asp47. Residues Arg116, Asp159, Arg162, Arg165, and Arg168 each contribute to the ATP site. CTP-binding residues include Arg116, Asp159, Arg162, Arg165, and Arg168.

The protein belongs to the tRNA nucleotidyltransferase/poly(A) polymerase family. Bacterial CCA-adding enzyme type 3 subfamily. Homodimer. Mg(2+) is required as a cofactor.

It carries out the reaction a tRNA precursor + 2 CTP + ATP = a tRNA with a 3' CCA end + 3 diphosphate. It catalyses the reaction a tRNA with a 3' CCA end + 2 CTP + ATP = a tRNA with a 3' CCACCA end + 3 diphosphate. Its function is as follows. Catalyzes the addition and repair of the essential 3'-terminal CCA sequence in tRNAs without using a nucleic acid template. Adds these three nucleotides in the order of C, C, and A to the tRNA nucleotide-73, using CTP and ATP as substrates and producing inorganic pyrophosphate. tRNA 3'-terminal CCA addition is required both for tRNA processing and repair. Also involved in tRNA surveillance by mediating tandem CCA addition to generate a CCACCA at the 3' terminus of unstable tRNAs. While stable tRNAs receive only 3'-terminal CCA, unstable tRNAs are marked with CCACCA and rapidly degraded. The protein is CCA-adding enzyme of Enterococcus faecalis (strain ATCC 700802 / V583).